The chain runs to 90 residues: Acylphosphatase (90 aa).

The Acylphosphatase-like domain maps to 5 to 90 (CVKASVKGIV…WRHIDGFEIK (86 aa)). Active-site residues include R20 and N38.

Belongs to the acylphosphatase family.

It catalyses the reaction an acyl phosphate + H2O = a carboxylate + phosphate + H(+). The protein is Acylphosphatase (acyP) of Photobacterium profundum (strain SS9).